Consider the following 665-residue polypeptide: Protein kinase domain-containing protein ppk2 (665 aa).

4 disordered regions span residues 42–63 (PNDS…KKKF), 82–152 (GNST…LSRS), 187–217 (LNSQ…SSMN), and 286–343 (AESL…VGHP). Over residues 82–104 (GNSTRSPPFHLQNQKSNGQSEVW) the composition is skewed to polar residues. Low complexity-rich tracts occupy residues 137 to 152 (SLSR…LSRS) and 206 to 217 (TNRLSSSTSSMN). The segment covering 294–316 (SATTIQQGDVSSYPLSRSVSTPV) has biased composition (polar residues). The residue at position 358 (Ser-358) is a Phosphoserine. One can recognise a Protein kinase domain in the interval 388 to 637 (YTDFTKICQQ…NMLLETSSFL (250 aa)). Residues 394–402 (ICQQDTVGT) and Lys-417 contribute to the ATP site.

The protein localises to the cytoplasm. The chain is Protein kinase domain-containing protein ppk2 (ppk2) from Schizosaccharomyces pombe (strain 972 / ATCC 24843) (Fission yeast).